The primary structure comprises 87 residues: Small ribosomal subunit protein bS20 (87 aa).

It belongs to the bacterial ribosomal protein bS20 family.

Binds directly to 16S ribosomal RNA. The sequence is that of Small ribosomal subunit protein bS20 from Sphingopyxis alaskensis (strain DSM 13593 / LMG 18877 / RB2256) (Sphingomonas alaskensis).